The following is a 173-amino-acid chain: Beta-defensin 129 (173 aa).

Residues 1–19 (MKLLFPIFASLMLQYKVNT) form the signal peptide. 3 disulfides stabilise this stretch: Cys27–Cys53, Cys34–Cys48, and Cys38–Cys54. The interval 144-173 (STKSNIKESRDSATASPPPAPPPPNTLPTP) is disordered. The span at 159–173 (SPPPAPPPPNTLPTP) shows a compositional bias: pro residues.

This sequence belongs to the beta-defensin family.

Its subcellular location is the secreted. Functionally, has antibacterial activity. This chain is Beta-defensin 129 (DEFB129), found in Hylobates lar (Lar gibbon).